Here is a 456-residue protein sequence, read N- to C-terminus: Exodeoxyribonuclease 7 large subunit (456 aa).

The protein belongs to the XseA family. Heterooligomer composed of large and small subunits.

It localises to the cytoplasm. The catalysed reaction is Exonucleolytic cleavage in either 5'- to 3'- or 3'- to 5'-direction to yield nucleoside 5'-phosphates.. Functionally, bidirectionally degrades single-stranded DNA into large acid-insoluble oligonucleotides, which are then degraded further into small acid-soluble oligonucleotides. This is Exodeoxyribonuclease 7 large subunit from Lactobacillus delbrueckii subsp. bulgaricus (strain ATCC BAA-365 / Lb-18).